Here is a 525-residue protein sequence, read N- to C-terminus: Light-independent protochlorophyllide reductase subunit B (525 aa).

Residue Asp-36 coordinates [4Fe-4S] cluster. The active-site Proton donor is the Asp-286. Residue 421–422 participates in substrate binding; sequence GL.

This sequence belongs to the ChlB/BchB/BchZ family. As to quaternary structure, protochlorophyllide reductase is composed of three subunits; ChlL, ChlN and ChlB. Forms a heterotetramer of two ChlB and two ChlN subunits. The cofactor is [4Fe-4S] cluster.

The enzyme catalyses chlorophyllide a + oxidized 2[4Fe-4S]-[ferredoxin] + 2 ADP + 2 phosphate = protochlorophyllide a + reduced 2[4Fe-4S]-[ferredoxin] + 2 ATP + 2 H2O. It functions in the pathway porphyrin-containing compound metabolism; chlorophyll biosynthesis (light-independent). Component of the dark-operative protochlorophyllide reductase (DPOR) that uses Mg-ATP and reduced ferredoxin to reduce ring D of protochlorophyllide (Pchlide) to form chlorophyllide a (Chlide). This reaction is light-independent. The NB-protein (ChlN-ChlB) is the catalytic component of the complex. In Prochlorococcus marinus (strain NATL1A), this protein is Light-independent protochlorophyllide reductase subunit B.